Reading from the N-terminus, the 300-residue chain is uncharacterized protein (300 aa).

A signal peptide spans 1–22 (MKSFVWTLLGALSLGSLTTAYG).

It is found in the endoplasmic reticulum. This is an uncharacterized protein from Schizosaccharomyces pombe (strain 972 / ATCC 24843) (Fission yeast).